The following is a 247-amino-acid chain: 5-oxoprolinase subunit A (247 aa).

It belongs to the LamB/PxpA family. Forms a complex composed of PxpA, PxpB and PxpC.

The catalysed reaction is 5-oxo-L-proline + ATP + 2 H2O = L-glutamate + ADP + phosphate + H(+). Its function is as follows. Catalyzes the cleavage of 5-oxoproline to form L-glutamate coupled to the hydrolysis of ATP to ADP and inorganic phosphate. The protein is 5-oxoprolinase subunit A of Klebsiella pneumoniae subsp. pneumoniae (strain ATCC 700721 / MGH 78578).